The following is a 260-amino-acid chain: WUSCHEL-related homeobox 2 (260 aa).

The segment at residues 10–74 is a DNA-binding region (homeobox; WUS-type); sequence ASSSRWNPTK…NHKARQRQKQ (65 aa).

It belongs to the WUS homeobox family.

It is found in the nucleus. Its function is as follows. Probable transcription factor involved in embryonic patterning. Required for apical embryo development after fertilization. Its specific localization to the apical daughter cell of the zygote, while WOX8 is confined to the basal cell, suggests that the asymmetric division of the plant zygote separates determinants of apical and basal cell fates. The protein is WUSCHEL-related homeobox 2 (WOX2) of Arabidopsis thaliana (Mouse-ear cress).